The chain runs to 336 residues: Glycerol-3-phosphate dehydrogenase [NAD(P)+] (336 aa).

5 residues coordinate NADPH: Ser-14, Trp-15, Arg-35, Arg-36, and Lys-109. The sn-glycerol 3-phosphate site is built by Lys-109 and Gly-139. An NADPH-binding site is contributed by Ala-143. The sn-glycerol 3-phosphate site is built by Lys-194, Asp-247, Ser-257, Arg-258, and Asn-259. The Proton acceptor role is filled by Lys-194. Residue Arg-258 coordinates NADPH. Glu-284 provides a ligand contact to NADPH.

The protein belongs to the NAD-dependent glycerol-3-phosphate dehydrogenase family.

Its subcellular location is the cytoplasm. It carries out the reaction sn-glycerol 3-phosphate + NAD(+) = dihydroxyacetone phosphate + NADH + H(+). The catalysed reaction is sn-glycerol 3-phosphate + NADP(+) = dihydroxyacetone phosphate + NADPH + H(+). The protein operates within membrane lipid metabolism; glycerophospholipid metabolism. Catalyzes the reduction of the glycolytic intermediate dihydroxyacetone phosphate (DHAP) to sn-glycerol 3-phosphate (G3P), the key precursor for phospholipid synthesis. This chain is Glycerol-3-phosphate dehydrogenase [NAD(P)+], found in Streptomyces griseus subsp. griseus (strain JCM 4626 / CBS 651.72 / NBRC 13350 / KCC S-0626 / ISP 5235).